The sequence spans 326 residues: Target of rapamycin complex subunit LST8 (326 aa).

N-acetylmethionine is present on M1. WD repeat units follow at residues 1–37 (MNTS…CTRT), 40–80 (HQDS…PIIS), 83–122 (GVNK…LQCQ), 126–165 (QVNA…NEQL), and 168–207 (EPEV…GDEV). At T51 the chain carries Phosphothreonine. A Glycyl lysine isopeptide (Lys-Gly) (interchain with G-Cter in SUMO3) cross-link involves residue K86. Residues K215, K245, and K261 each participate in a glycyl lysine isopeptide (Lys-Gly) (interchain with G-Cter in SUMO3) cross-link. A WD 6 repeat occupies 218–257 (AHTRYALQCRFSPDSTLLATCSADQTCKIWRTSNFSLMTE). One copy of the WD 7 repeat lies at 268–309 (SSRGWMWGCAFSGDSQYIVTASSDNLARLWCVETGEIKREYG). A Glycyl lysine isopeptide (Lys-Gly) (interchain with G-Cter in SUMO3); alternate cross-link involves residue K305. Glycyl lysine isopeptide (Lys-Gly) (interchain with G-Cter in ubiquitin); alternate cross-links involve residues K305 and K313. Residue K313 forms a Glycyl lysine isopeptide (Lys-Gly) (interchain with G-Cter in SUMO1); alternate linkage.

Belongs to the WD repeat LST8 family. In terms of assembly, part of the mechanistic target of rapamycin complex 1 (mTORC1) which contains MTOR, MLST8 and RPTOR. mTORC1 associates with AKT1S1/PRAS40, which inhibits its activity. mTORC1 binds to and is inhibited by FKBP12-rapamycin. Within mTORC1, interacts directly with MTOR and RPTOR. Component of the mechanistic target of rapamycin complex 2 (mTORC2), consisting in two heterotretramers composed of MTOR, MLST8, RICTOR and MAPKAP1/SIN1. Contrary to mTORC1, mTORC2 does not bind to and is not sensitive to FKBP12-rapamycin. mTORC1 and mTORC2 associate with DEPTOR, which regulates their activity. Interacts with RHEB. Interacts with MEAK7. Interacts with SIK3. Interacts with SLC38A7; this interaction promotes the recruitment of mTORC1 to the lysosome and its subsequent activation. Phosphorylation at Thr-51 by CDK1 promotes ubiquitination by the SCF(FBXW7) complex, followed by degradation. In terms of processing, ubiquitination by the SCF(FBXW7) and SCF(FBXW11) complexes following phosphorylation at Thr-51 by CDK1, leads to its degradation by the proteasome. Ubiquitination at Lys-305 and Lys-313 by TRAF2 via 'Lys-63'-linked polyubiquitin chains inhibits formation of the mTORC2 complex, while promoting formation of the mTORC1 complex: ubiquitination disrupts the interaction between MLST8 and MAPKAP1/SIN1 to favor mTORC1 assembly. Deubiquitination at Lys-305 and Lys-313 by OTUD7B promotes MLST8 interaction with MAPKAP1/SIN1, facilitating mTORC2 assembly. Post-translationally, sumoylation with SUMO1, SUMO2 and SUMO3 promotes assembly of both mTORC1 and mTORC2 complexes.

The protein localises to the lysosome membrane. The protein resides in the cytoplasm. In terms of biological role, subunit of both mTORC1 and mTORC2, which regulates cell growth and survival in response to nutrient and hormonal signals. mTORC1 is activated in response to growth factors or amino acids. In response to nutrients, mTORC1 is recruited to the lysosome membrane and promotes protein, lipid and nucleotide synthesis by phosphorylating several substrates, such as ribosomal protein S6 kinase (RPS6KB1 and RPS6KB2) and EIF4EBP1 (4E-BP1). In the same time, it inhibits catabolic pathways by phosphorylating the autophagy initiation components ULK1 and ATG13, as well as transcription factor TFEB, a master regulators of lysosomal biogenesis and autophagy. The mTORC1 complex is inhibited in response to starvation and amino acid depletion. Within mTORC1, MLST8 interacts directly with MTOR and enhances its kinase activity. In nutrient-poor conditions, stabilizes the MTOR-RPTOR interaction and favors RPTOR-mediated inhibition of MTOR activity. As part of the mTORC2 complex, transduces signals from growth factors to pathways involved in proliferation, cytoskeletal organization, lipogenesis and anabolic output. mTORC2 is also activated by growth factors, but seems to be nutrient-insensitive. In response to growth factors, mTORC2 phosphorylates and activates AGC protein kinase family members, including AKT (AKT1, AKT2 and AKT3), PKC (PRKCA, PRKCB and PRKCE) and SGK1. mTORC2 functions upstream of Rho GTPases to regulate the actin cytoskeleton, probably by activating one or more Rho-type guanine nucleotide exchange factors. mTORC2 promotes the serum-induced formation of stress-fibers or F-actin. mTORC2 plays a critical role in AKT1 activation by mediating phosphorylation of different sites depending on the context, such as 'Thr-450', 'Ser-473', 'Ser-477' or 'Thr-479', facilitating the phosphorylation of the activation loop of AKT1 on 'Thr-308' by PDPK1/PDK1 which is a prerequisite for full activation. mTORC2 regulates the phosphorylation of SGK1 at 'Ser-422'. mTORC2 also modulates the phosphorylation of PRKCA on 'Ser-657'. Within mTORC2, MLST8 acts as a bridge between MAPKAP1/SIN1 and MTOR. The protein is Target of rapamycin complex subunit LST8 of Bos taurus (Bovine).